We begin with the raw amino-acid sequence, 184 residues long: Probable RNA 2'-phosphotransferase (184 aa).

Belongs to the KptA/TPT1 family.

Removes the 2'-phosphate from RNA via an intermediate in which the phosphate is ADP-ribosylated by NAD followed by a presumed transesterification to release the RNA and generate ADP-ribose 1''-2''-cyclic phosphate (APPR&gt;P). May function as an ADP-ribosylase. The chain is Probable RNA 2'-phosphotransferase from Escherichia coli O6:K15:H31 (strain 536 / UPEC).